We begin with the raw amino-acid sequence, 225 residues long: Urease subunit alpha (225 aa).

A urease gamma region spans residues 1–102; the sequence is MRLTPKELDK…LVTIHNPIED (102 aa). The urease beta stretch occupies residues 103 to 225; it reads NGKLTPGEYI…ANAAQKHFIH (123 aa).

This sequence in the N-terminal section; belongs to the urease gamma subunit family. It in the C-terminal section; belongs to the urease beta subunit family. Heterohexamer of 3 UreA (alpha) and 3 UreB (beta) subunits.

Its subcellular location is the cytoplasm. It carries out the reaction urea + 2 H2O + H(+) = hydrogencarbonate + 2 NH4(+). It participates in nitrogen metabolism; urea degradation; CO(2) and NH(3) from urea (urease route): step 1/1. The polypeptide is Urease subunit alpha (Helicobacter hepaticus (strain ATCC 51449 / 3B1)).